The chain runs to 183 residues: Intermembrane phospholipid transport system binding protein MlaD (183 aa).

The Cytoplasmic segment spans residues 1 to 7; it reads MQTKKNE. Residues 8-28 traverse the membrane as a helical; Signal-anchor for type II membrane protein segment; the sequence is IWVGIFLLAALLAALFVCLKA. Residues 29 to 183 are Periplasmic-facing; that stretch reads ANVTSIRTEP…ETTEPVGTTK (155 aa). An MCE/MlaD region spans residues 39 to 116; sequence TYTLYATFDN…LGEQYLALNV (78 aa). The disordered stretch occupies residues 155–183; it reads KGDDNKNSGDAPAAAPGNNETTEPVGTTK. Residues 172–183 show a composition bias toward polar residues; it reads NNETTEPVGTTK.

Belongs to the MlaD family. The complex is composed of two ATP-binding proteins (MlaF), two transmembrane proteins (MlaE), two cytoplasmic solute-binding proteins (MlaB) and six periplasmic solute-binding proteins (MlaD).

The protein resides in the cell inner membrane. Part of the ABC transporter complex MlaFEDB, which is involved in a phospholipid transport pathway that maintains lipid asymmetry in the outer membrane by retrograde trafficking of phospholipids from the outer membrane to the inner membrane. MlaD functions in substrate binding with strong affinity for phospholipids and modulates ATP hydrolytic activity of the complex. This Escherichia coli O157:H7 protein is Intermembrane phospholipid transport system binding protein MlaD.